The chain runs to 382 residues: tRNA(Ile)-lysidine synthase (382 aa).

Residue 50–55 (SGGRDS) coordinates ATP.

This sequence belongs to the tRNA(Ile)-lysidine synthase family.

The protein resides in the cytoplasm. The enzyme catalyses cytidine(34) in tRNA(Ile2) + L-lysine + ATP = lysidine(34) in tRNA(Ile2) + AMP + diphosphate + H(+). Ligates lysine onto the cytidine present at position 34 of the AUA codon-specific tRNA(Ile) that contains the anticodon CAU, in an ATP-dependent manner. Cytidine is converted to lysidine, thus changing the amino acid specificity of the tRNA from methionine to isoleucine. The protein is tRNA(Ile)-lysidine synthase of Bifidobacterium animalis subsp. lactis (strain AD011).